Reading from the N-terminus, the 713-residue chain is Macrophage-expressed gene 1 protein (713 aa).

Positions 1-19 are cleaved as a signal peptide; the sequence is MNSFMALVLIWMIIACAEA. An MACPF domain is found at 30 to 345; the sequence is GFQICKNALK…TAVRHYYTFN (316 aa). An intrachain disulfide couples Cys34 to Cys70. The next 2 beta stranded transmembrane spans lie at 113–120 and 127–132; these read LSINTELA and GKFSTE. Asn185 carries N-linked (GlcNAc...) asparagine glycosylation. The next 2 membrane-spanning stretches (beta stranded) occupy residues 235 to 244 and 248 to 256; these read TVTASAGIAF and VNFKVETDY. N-linked (GlcNAc...) asparagine glycosylation is present at Asn269. Cysteines 350 and 369 form a disulfide. Asn375 is a glycosylation site (N-linked (GlcNAc...) asparagine). 5 disulfide bridges follow: Cys385-Cys394, Cys432-Cys446, Cys436-Cys442, Cys531-Cys569, and Cys554-Cys574. Residues 410–653 form a P2 region; sequence PPGYSPVHLL…GDSNGMSGGE (244 aa). Residues 654 to 674 form a helical membrane-spanning segment; that stretch reads AAGITLGVTIALGIVITLAIY.

The protein belongs to the MPEG1 family. Homooligomer; predominantly forms a homooligomeric arc-shaped pore complex instead of complete rings of 16 subunits. Post-translationally, proteolytically processed in two steps to generate the Macrophage-expressed gene 1 protein, processed form: cleaved by trypsin in proximity of the helical transmembrane domain releases the ectodomain into the lysosomal lumen to orient the pore-forming domain toward the endogenous membranes, and processed by the asparagine endopeptidase (LGMN). Proteolytic processing in antigen-containing vesicles is pH-dependent. Monoubiquitinated in response to bacterial infection; ubiquitination is required for vesicular localization and antibacterial activity and can be blocked by bacterial cell cycle inhibiting factor (cif). In terms of tissue distribution, expressed constitutively in a variety of cell types including macrophages, microglia, neutrophils, T cells, marginal zone B cells, keratinocytes, splenocytes and intestinal epithelial cells.

It is found in the cytoplasmic vesicle membrane. It localises to the cytoplasmic vesicle. The protein localises to the phagosome membrane. Its activity is regulated as follows. Forms arc- and ring-shaped pre-pores on top of the membrane at neutral to slightly acidic pH conditions and converts to pores upon acidification. Undergoes transition from the pre-pore to the pore in a processive clockwise hand-over-hand process. In the pore state, 2 alpha-helical regions refold into transmembrane hairpins (TMH1 and TMH2) in each protomer that form in the ensemble complex giant beta-barrel transmembrane pores. Pore-forming protein involved in both innate and adaptive immunity. Plays a central role in antigen cross-presentation in dendritic cells by forming a pore in antigen-containing compartments, thereby promoting delivery of antigens for cross-presentation. Also involved in innate immune response following bacterial infection; shows antibacterial activity against a wide spectrum of Gram-positive, Gram-negative and acid-fast bacteria. Reduces the viability of the intracytosolic pathogen L.monocytogenes by inhibiting acidification of the phagocytic vacuole of host cells which restricts bacterial translocation from the vacuole to the cytosol. Required for the antibacterial activity of reactive oxygen species and nitric oxide. Functionally, pore-forming protein that plays a central role in antigen cross-presentation in dendritic cells by mediating delivery of antigens for cross-presentation. Dendritic cells bridge innate and adaptive immunity by capturing exogenous antigens on MHC class-I molecules and presenting them to naive CD8(+) T-cells. Acts by forming a pore in antigen-containing compartments, promoting the release of antigens into the cytosol, enabling generation of MHCI:peptide complexes and T-cell priming. The polypeptide is Macrophage-expressed gene 1 protein (Mus musculus (Mouse)).